A 305-amino-acid chain; its full sequence is MKSNIDKQAVKNFLLQLQDQICQQLEAADGQAQFIEDAWQREPGEKLGGGGRTRVMRDGAVFEQGGVNFSHVFGEQMPGSATAHRPELAGRRFEAMGVSLVMHPKNPYVPTSHANVRYFIAEKEGEDPIWWFGGGFDLTPFYPFVEDCQLWHQTAKNLCAPFGAEIYNEHKAWCDRYFYLPHRNETRGIGGLFFDDLNEWPFEQCFAYMQAVGEGYTQAYVPIVEKRKNTPFTERERQFQLYRRGRYVEFNLVLDRGTLFGLQTGGRTESILMSMPPLARWEYAYQPESGTPEAQLSEFLVPREW.

Substrate is bound at residue serine 99. A divalent metal cation contacts are provided by histidine 103 and histidine 113. Histidine 113 acts as the Proton donor in catalysis. Residue asparagine 115–arginine 117 participates in substrate binding. Residues histidine 152 and histidine 182 each contribute to the a divalent metal cation site. The tract at residues tyrosine 247 to glutamate 282 is important for dimerization. Glycine 265–arginine 267 contacts substrate.

The protein belongs to the aerobic coproporphyrinogen-III oxidase family. Homodimer. A divalent metal cation is required as a cofactor.

It localises to the cytoplasm. It carries out the reaction coproporphyrinogen III + O2 + 2 H(+) = protoporphyrinogen IX + 2 CO2 + 2 H2O. It functions in the pathway porphyrin-containing compound metabolism; protoporphyrin-IX biosynthesis; protoporphyrinogen-IX from coproporphyrinogen-III (O2 route): step 1/1. Involved in the heme biosynthesis. Catalyzes the aerobic oxidative decarboxylation of propionate groups of rings A and B of coproporphyrinogen-III to yield the vinyl groups in protoporphyrinogen-IX. The polypeptide is Oxygen-dependent coproporphyrinogen-III oxidase (Vibrio cholerae serotype O1 (strain M66-2)).